Reading from the N-terminus, the 198-residue chain is Regulation of enolase protein 1 (198 aa).

The protein localises to the cytoplasm. Functions in the galactose metabolic pathway via the GAL83 protein and that it may control the level of ENO1. The chain is Regulation of enolase protein 1 (REE1) from Saccharomyces cerevisiae (strain ATCC 204508 / S288c) (Baker's yeast).